Consider the following 467-residue polypeptide: Hydroxyacid-oxoacid transhydrogenase, mitochondrial (467 aa).

Lys-445 is modified (N6-acetyllysine). Ser-452 carries the phosphoserine modification.

The protein belongs to the iron-containing alcohol dehydrogenase family. Hydroxyacid-oxoacid transhydrogenase subfamily. Expressed in kidney and liver.

The protein resides in the mitochondrion. The enzyme catalyses (S)-3-hydroxybutanoate + 2-oxoglutarate = (R)-2-hydroxyglutarate + acetoacetate. It carries out the reaction 4-hydroxybutanoate + 2-oxoglutarate = (R)-2-hydroxyglutarate + succinate semialdehyde. Its function is as follows. Catalyzes the cofactor-independent reversible oxidation of gamma-hydroxybutyrate (GHB) to succinic semialdehyde (SSA) coupled to reduction of 2-ketoglutarate (2-KG) to D-2-hydroxyglutarate (D-2-HG). L-3-hydroxybutyrate (L-3-OHB) is also a substrate for HOT when using 2-KG as hydrogen acceptor, resulting in the formation of D-2-HG. The protein is Hydroxyacid-oxoacid transhydrogenase, mitochondrial (Adhfe1) of Rattus norvegicus (Rat).